The following is a 159-amino-acid chain: 2-C-methyl-D-erythritol 2,4-cyclodiphosphate synthase (159 aa).

The a divalent metal cation site is built by Asp-8 and His-10. 4-CDP-2-C-methyl-D-erythritol 2-phosphate contacts are provided by residues 8 to 10 (DVH) and 34 to 35 (HS). His-42 provides a ligand contact to a divalent metal cation. 4-CDP-2-C-methyl-D-erythritol 2-phosphate contacts are provided by residues 56 to 58 (DIG), 61 to 65 (FPDTD), 100 to 106 (AQAPKML), 132 to 135 (TTTE), Phe-139, and Arg-142.

It belongs to the IspF family. In terms of assembly, homotrimer. A divalent metal cation is required as a cofactor.

The catalysed reaction is 4-CDP-2-C-methyl-D-erythritol 2-phosphate = 2-C-methyl-D-erythritol 2,4-cyclic diphosphate + CMP. Its pathway is isoprenoid biosynthesis; isopentenyl diphosphate biosynthesis via DXP pathway; isopentenyl diphosphate from 1-deoxy-D-xylulose 5-phosphate: step 4/6. Its function is as follows. Involved in the biosynthesis of isopentenyl diphosphate (IPP) and dimethylallyl diphosphate (DMAPP), two major building blocks of isoprenoid compounds. Catalyzes the conversion of 4-diphosphocytidyl-2-C-methyl-D-erythritol 2-phosphate (CDP-ME2P) to 2-C-methyl-D-erythritol 2,4-cyclodiphosphate (ME-CPP) with a corresponding release of cytidine 5-monophosphate (CMP). The sequence is that of 2-C-methyl-D-erythritol 2,4-cyclodiphosphate synthase from Salmonella typhi.